The primary structure comprises 353 residues: Peroxidase C1A (353 aa).

The signal sequence occupies residues 1 to 30; the sequence is MHFSSSSTLFTCITLIPLVCLILHASLSDA. Glutamine 31 carries the post-translational modification Pyrrolidone carboxylic acid. 4 disulfide bridges follow: cysteine 41-cysteine 121, cysteine 74-cysteine 79, cysteine 127-cysteine 331, and cysteine 207-cysteine 239. Asparagine 43 carries N-linked (GlcNAc...) asparagine glycosylation. Histidine 72 functions as the Proton acceptor in the catalytic mechanism. Ca(2+)-binding residues include aspartate 73, valine 76, glycine 78, aspartate 80, and serine 82. A glycan (N-linked (GlcNAc...) asparagine) is linked at asparagine 87. Glutamate 94 lines the Ca(2+) pocket. Proline 169 contacts substrate. Residue asparagine 188 is glycosylated (N-linked (GlcNAc...) asparagine). Residue histidine 200 participates in heme b binding. Residue threonine 201 coordinates Ca(2+). Asparagine 216, asparagine 228, and asparagine 244 each carry an N-linked (GlcNAc...) asparagine glycan. Ca(2+)-binding residues include aspartate 252, threonine 255, and aspartate 260. Residues asparagine 285 and asparagine 298 are each glycosylated (N-linked (GlcNAc...) asparagine). Positions 339–353 are excised as a propeptide; it reads LLHDMVEVVDFVSSM.

The protein belongs to the peroxidase family. Classical plant (class III) peroxidase subfamily. In terms of assembly, monomer. Ca(2+) serves as cofactor. The cofactor is heme b.

The protein localises to the secreted. It is found in the vacuole. The enzyme catalyses 2 a phenolic donor + H2O2 = 2 a phenolic radical donor + 2 H2O. In terms of biological role, removal of H(2)O(2), oxidation of toxic reductants, biosynthesis and degradation of lignin, suberization, auxin catabolism, response to environmental stresses such as wounding, pathogen attack and oxidative stress. These functions might be dependent on each isozyme/isoform in each plant tissue. This chain is Peroxidase C1A (PRXC1A), found in Armoracia rusticana (Horseradish).